Reading from the N-terminus, the 278-residue chain is Urease accessory protein UreD (278 aa).

The protein belongs to the UreD family. In terms of assembly, ureD, UreF and UreG form a complex that acts as a GTP-hydrolysis-dependent molecular chaperone, activating the urease apoprotein by helping to assemble the nickel containing metallocenter of UreC. The UreE protein probably delivers the nickel.

It is found in the cytoplasm. Functionally, required for maturation of urease via the functional incorporation of the urease nickel metallocenter. The protein is Urease accessory protein UreD of Staphylococcus aureus (strain bovine RF122 / ET3-1).